We begin with the raw amino-acid sequence, 330 residues long: Lysophospholipase D GDPD3 (330 aa).

M1 is a topological domain (cytoplasmic). Residues I2–F22 traverse the membrane as a helical segment. Topologically, residues L23 to T200 are extracellular. The region spanning I39 to L308 is the GP-PDE domain. A divalent metal cation-binding residues include E71, D73, and H86. The chain crosses the membrane as a helical span at residues I201 to I221. The Cytoplasmic portion of the chain corresponds to P222–K330. Residues Q311–K330 form a disordered region.

This sequence belongs to the glycerophosphoryl diester phosphodiesterase family. In terms of tissue distribution, highly expressed in stomach and kidney. In stomach detected in the glandular epithelium. Predominantly expressed in the stomach (at protein level).

Its subcellular location is the membrane. The protein resides in the cytoplasm. The protein localises to the perinuclear region. It localises to the endoplasmic reticulum membrane. The catalysed reaction is 1-hexadecanoyl-sn-glycero-3-phosphocholine + H2O = 1-hexadecanoyl-sn-glycero-3-phosphate + choline + H(+). It carries out the reaction 1-O-hexadecyl-sn-glycero-3-phosphocholine + H2O = 1-O-hexadecyl-sn-glycero-3-phosphate + choline + H(+). The enzyme catalyses 1-O-(1Z-octadecenyl)-sn-glycero-3-phospho-N-hexadecanoyl-ethanolamine + H2O = 1-O-(1Z-octadecenyl)-sn-glycero-3-phosphate + N-hexadecanoylethanolamine + H(+). It catalyses the reaction N-(5Z,8Z,11Z,14Z-eicosatetraenoyl)-1-(9Z-octadecenoyl)-sn-glycero-3-phosphoethanolamine + H2O = N-(5Z,8Z,11Z,14Z-eicosatetraenoyl)-ethanolamine + 1-(9Z-octadecenoyl)-sn-glycero-3-phosphate + H(+). The catalysed reaction is N,1-di-(9Z-octadecenoyl)-sn-glycero-3-phosphoethanolamine + H2O = N-(9Z-octadecenoyl) ethanolamine + 1-(9Z-octadecenoyl)-sn-glycero-3-phosphate + H(+). It carries out the reaction N-hexadecanoyl-1-(9Z-octadecenoyl)-sn-glycero-3-phosphoethanolamine + H2O = N-hexadecanoylethanolamine + 1-(9Z-octadecenoyl)-sn-glycero-3-phosphate + H(+). The enzyme catalyses 1-hexadecanoyl-sn-glycero-3-phosphocholine + H2O = sn-glycerol 3-phosphocholine + hexadecanoate + H(+). Lysophospholipase D activity is stimulated by calcium. Loss of lysophospholipase D activity in presence of EDTA. Hydrolyzes lysoglycerophospholipids to produce lysophosphatidic acid (LPA) and the corresponding amines. Shows a preference for 1-O-alkyl-sn-glycero-3-phosphocholine (lyso-PAF), lysophosphatidylcholine (lyso-PC) and N-acylethanolamine lysophospholipids. Does not display glycerophosphodiester phosphodiesterase activity, since it cannot hydrolyze either glycerophosphoinositol or glycerophosphocholine. The protein is Lysophospholipase D GDPD3 of Mus musculus (Mouse).